Here is a 133-residue protein sequence, read N- to C-terminus: Egg protein CP422 (133 aa).

The first 21 residues, 1-21 (MHECMIVFFIFAVVSIYYADA), serve as a signal peptide directing secretion. 3 disulfides stabilise this stretch: cysteine 107/cysteine 121, cysteine 114/cysteine 125, and cysteine 120/cysteine 130.

The protein localises to the secreted. The protein is Egg protein CP422 (CP422) of Schistosoma japonicum (Blood fluke).